We begin with the raw amino-acid sequence, 342 residues long: Biotin synthase (342 aa).

The 226-residue stretch at 63-288 folds into the Radical SAM core domain; it reads PEVEVEGIIS…RTMLRFAGGR (226 aa). Residues cysteine 78, cysteine 82, and cysteine 85 each coordinate [4Fe-4S] cluster. Cysteine 121, cysteine 154, cysteine 213, and arginine 283 together coordinate [2Fe-2S] cluster.

This sequence belongs to the radical SAM superfamily. Biotin synthase family. As to quaternary structure, homodimer. [4Fe-4S] cluster is required as a cofactor. [2Fe-2S] cluster serves as cofactor.

The enzyme catalyses (4R,5S)-dethiobiotin + (sulfur carrier)-SH + 2 reduced [2Fe-2S]-[ferredoxin] + 2 S-adenosyl-L-methionine = (sulfur carrier)-H + biotin + 2 5'-deoxyadenosine + 2 L-methionine + 2 oxidized [2Fe-2S]-[ferredoxin]. Its pathway is cofactor biosynthesis; biotin biosynthesis; biotin from 7,8-diaminononanoate: step 2/2. Its function is as follows. Catalyzes the conversion of dethiobiotin (DTB) to biotin by the insertion of a sulfur atom into dethiobiotin via a radical-based mechanism. This is Biotin synthase from Mycobacteroides abscessus (strain ATCC 19977 / DSM 44196 / CCUG 20993 / CIP 104536 / JCM 13569 / NCTC 13031 / TMC 1543 / L948) (Mycobacterium abscessus).